The primary structure comprises 56 residues: Large ribosomal subunit protein bL33 (56 aa).

Positions 1–12 are enriched in basic and acidic residues; the sequence is MATKGGREKIKL. Residues 1 to 28 are disordered; it reads MATKGGREKIKLESTAGTGHFYTTSKNK. Residues 15-25 are compositionally biased toward polar residues; sequence TAGTGHFYTTS.

This sequence belongs to the bacterial ribosomal protein bL33 family.

This chain is Large ribosomal subunit protein bL33, found in Albidiferax ferrireducens (strain ATCC BAA-621 / DSM 15236 / T118) (Rhodoferax ferrireducens).